Consider the following 156-residue polypeptide: 6,7-dimethyl-8-ribityllumazine synthase (156 aa).

5-amino-6-(D-ribitylamino)uracil is bound by residues Phe-22, 57–59 (AYE), and 81–83 (TVI). A (2S)-2-hydroxy-3-oxobutyl phosphate-binding site is contributed by 86–87 (GT). Catalysis depends on His-89, which acts as the Proton donor. Phe-114 is a binding site for 5-amino-6-(D-ribitylamino)uracil. A (2S)-2-hydroxy-3-oxobutyl phosphate-binding site is contributed by Arg-128.

This sequence belongs to the DMRL synthase family. As to quaternary structure, forms an icosahedral capsid composed of 60 subunits, arranged as a dodecamer of pentamers.

The catalysed reaction is (2S)-2-hydroxy-3-oxobutyl phosphate + 5-amino-6-(D-ribitylamino)uracil = 6,7-dimethyl-8-(1-D-ribityl)lumazine + phosphate + 2 H2O + H(+). Its pathway is cofactor biosynthesis; riboflavin biosynthesis; riboflavin from 2-hydroxy-3-oxobutyl phosphate and 5-amino-6-(D-ribitylamino)uracil: step 1/2. In terms of biological role, catalyzes the formation of 6,7-dimethyl-8-ribityllumazine by condensation of 5-amino-6-(D-ribitylamino)uracil with 3,4-dihydroxy-2-butanone 4-phosphate. This is the penultimate step in the biosynthesis of riboflavin. In Photorhabdus laumondii subsp. laumondii (strain DSM 15139 / CIP 105565 / TT01) (Photorhabdus luminescens subsp. laumondii), this protein is 6,7-dimethyl-8-ribityllumazine synthase.